The primary structure comprises 743 residues: GTPase-activating protein gyp7 (743 aa).

The region spanning 411–633 is the Rab-GAP TBC domain; the sequence is GIQPSLRKEV…KLWDVLFTNY (223 aa).

The protein resides in the cytoplasm. Its subcellular location is the nucleus. Its function is as follows. Most effectively accelerates the intrinsic GTPase activity of ypt7. The polypeptide is GTPase-activating protein gyp7 (Schizosaccharomyces pombe (strain 972 / ATCC 24843) (Fission yeast)).